Reading from the N-terminus, the 312-residue chain is Polyamine aminopropyltransferase (312 aa).

The region spanning 7–247 (FFWAQEYFTP…GPLGFALAAQ (241 aa)) is the PABS domain. Glutamine 36 is an S-methyl-5'-thioadenosine binding site. 2 residues coordinate spermidine: histidine 67 and glutamate 95. Residues aspartate 115 and 147 to 148 (DA) contribute to the S-methyl-5'-thioadenosine site. The active-site Proton acceptor is aspartate 165. Proline 174 contacts S-methyl-5'-thioadenosine.

Belongs to the spermidine/spermine synthase family. In terms of assembly, homodimer or homotetramer.

The protein localises to the cytoplasm. The enzyme catalyses S-adenosyl 3-(methylsulfanyl)propylamine + putrescine = S-methyl-5'-thioadenosine + spermidine + H(+). Its pathway is amine and polyamine biosynthesis; spermidine biosynthesis; spermidine from putrescine: step 1/1. Functionally, catalyzes the irreversible transfer of a propylamine group from the amino donor S-adenosylmethioninamine (decarboxy-AdoMet) to putrescine (1,4-diaminobutane) to yield spermidine. This chain is Polyamine aminopropyltransferase, found in Synechococcus sp. (strain JA-3-3Ab) (Cyanobacteria bacterium Yellowstone A-Prime).